Here is a 43-residue protein sequence, read N- to C-terminus: MIELSLIDFYLCFLAFLLFLVLIMLIIFWFSLELQDHNETCHA.

The chain crosses the membrane as a helical span at residues 9 to 29; that stretch reads FYLCFLAFLLFLVLIMLIIFW.

It is found in the host Golgi apparatus membrane. The protein localises to the host endosome membrane. This chain is ORF7b protein, found in Homo sapiens (Human).